The chain runs to 471 residues: Heat shock 70 kDa protein 13 (471 aa).

An N-terminal signal peptide occupies residues 1-22 (MAREMTILGSAVLTLLLAGYLA). Positions 315 to 341 (EQDRKEPHSSDTELPKDKLSSADDHRV) are enriched in basic and acidic residues. The segment at 315 to 352 (EQDRKEPHSSDTELPKDKLSSADDHRVNSGFGRGLSDK) is disordered.

This sequence belongs to the heat shock protein 70 family. Binds UBQLN2. In terms of tissue distribution, constitutively expressed in all tissues.

Its subcellular location is the microsome. The protein resides in the endoplasmic reticulum. In terms of biological role, has peptide-independent ATPase activity. In Homo sapiens (Human), this protein is Heat shock 70 kDa protein 13 (HSPA13).